Consider the following 364-residue polypeptide: Protein-glutamate methylesterase/protein-glutamine glutaminase (364 aa).

The region spanning 7 to 124 (RALIVDDSAL…SQNMPDMAEE (118 aa)) is the Response regulatory domain. Asp58 is modified (4-aspartylphosphate). Residues 167 to 364 (ETTSFVRNVL…MAEEIVKIIS (198 aa)) form the CheB-type methylesterase domain. Catalysis depends on residues Ser181, His208, and Asp308.

The protein belongs to the CheB family. In terms of processing, phosphorylated by CheA. Phosphorylation of the N-terminal regulatory domain activates the methylesterase activity.

It localises to the cytoplasm. It catalyses the reaction [protein]-L-glutamate 5-O-methyl ester + H2O = L-glutamyl-[protein] + methanol + H(+). The catalysed reaction is L-glutaminyl-[protein] + H2O = L-glutamyl-[protein] + NH4(+). Functionally, involved in chemotaxis. Part of a chemotaxis signal transduction system that modulates chemotaxis in response to various stimuli. Catalyzes the demethylation of specific methylglutamate residues introduced into the chemoreceptors (methyl-accepting chemotaxis proteins or MCP) by CheR. Also mediates the irreversible deamidation of specific glutamine residues to glutamic acid. The polypeptide is Protein-glutamate methylesterase/protein-glutamine glutaminase (Methanosarcina barkeri (strain Fusaro / DSM 804)).